The primary structure comprises 266 residues: U2 small nuclear ribonucleoprotein A' (266 aa).

4 LRR repeats span residues 30–51, 53–74, 75–95, and 97–118; these read ILRNLGLEGDDIAMPASLNHLA, PTHILDLTNNDLVFFPDLHHRD, DIETLLLSKNRLMVLDAALLP, and KLKSLSLAFNGIENFETLIPLS. The region spanning 132-170 is the LRRCT domain; that stretch reads NPICHLSEYRQRILALVPSLEVLDFKLVSQAEKAQAVKD.

Belongs to the U2 small nuclear ribonucleoprotein A family. Associated with the spliceosome.

Its subcellular location is the nucleus. Functionally, involved in pre-mRNA splicing. This is U2 small nuclear ribonucleoprotein A' (LEA1) from Candida glabrata (strain ATCC 2001 / BCRC 20586 / JCM 3761 / NBRC 0622 / NRRL Y-65 / CBS 138) (Yeast).